The following is a 569-amino-acid chain: Cell death protein 4 (569 aa).

Positions 1–91 (MLCEIECRAL…HLKDFLDEYL (91 aa)) constitute a CARD domain. The 327-residue stretch at 116 to 442 (DRKLLLGNVP…IWSCVIPVDI (327 aa)) folds into the NB-ARC domain. ATP is bound by residues Phe131, 162 to 167 (GSGKSV), and Gln171. Residue Ser166 coordinates Mg(2+).

Associates as an asymmetric homodimer with ced-9. Upon release from ced-9, forms an octamer, known as the apoptosome, and interacts with ced-3; the interaction results in ced-3 autoproteolytic cleavage and activation. The octamer (a tetramer of an asymmetric dimer) also interacts with two processed ced-3 to form a stable holoenzyme. Interacts with sex-determining protein fem-1. May form a complex composed of ced-3, ced-4 and mac-1 or of ced-9, ced-4 and mac-1. Within the complex, interacts with ced-4.

Its subcellular location is the mitochondrion. The protein resides in the cytoplasm. It localises to the perinuclear region. In terms of biological role, plays a major role in programmed cell death (PCD, apoptosis). egl-1 binds to and directly inhibits the activity of ced-9, releasing the cell death activator ced-4 from a ced-9/ced-4 containing protein complex and allowing ced-4 to induce caspase ced-3 autoproteolytic cleavage and activation. Also forms a holoenzyme with processed ced-3 enhancing ced-3 activity. Component of the egl-1, ced-9, ced-4 and ced-3 apoptotic signaling cascade required for the initiation of programmed cell death in cells fated to die during embryonic and postembryonic development. During oogenesis, required for germline apoptosis downstream of ced-9 and upstream of ced-3 but independently of egl-1. May regulate germline apoptosis in response to DNA damage, probably downstream of let-60/ras and mpk-1 pathway. Regulates CEP neuron apoptosis in response to high Al(3+) levels. During male tail morphogenesis, promotes apoptosis of the tail-spike cell. During larval development, required for the elimination of transient presynaptic components downstream of egl-1 and ced-9 and upstream of ced-3 apoptotic pathway. Together with ain-1, a component of the miRNA-induced-silencing complex (miRISC), and probably upstream of ced-3, regulates temporal cell fate patterning during larval development. May play a role in resistance to S.typhimurium-mediated infection. The sequence is that of Cell death protein 4 from Caenorhabditis briggsae.